A 128-amino-acid chain; its full sequence is Disintegrin EO4A (128 aa).

The first 20 residues, 1 to 20, serve as a signal peptide directing secretion; it reads MIPVLLVTICLAVFPFQGSS. Positions 21-47 are excised as a propeptide; sequence IILESGNINDYEIVYPKKVNVLPTGAM. The 87-residue stretch at 26–112 folds into the Disintegrin domain; it reads GNINDYEIVY…DCPRNPYKGK (87 aa). Cystine bridges form between cysteine 53-cysteine 76, cysteine 67-cysteine 73, cysteine 72-cysteine 97, and cysteine 85-cysteine 104. Positions 89 to 91 match the Cell attachment site motif; that stretch reads RGD. A propeptide spanning residues 115-128 is cleaved from the precursor; it reads PMKWPAAAKGSVLM.

It belongs to the disintegrin family. Dimeric disintegrin subfamily. As to quaternary structure, heterodimer with EO5B; disulfide-linked. As to expression, expressed by the venom gland.

Its subcellular location is the secreted. Functionally, poor inhibitor of platelet aggregation. The disintegrin inhibits the adhesion of cells expressing the RGD-dependent integrin alpha-5/beta-1 (ITGA5/ITGB1) to immobilized fibronectin. Inhibition on alpha-2b/beta-3 (ITGA2B/ITGB3) is low. The protein is Disintegrin EO4A of Echis ocellatus (Ocellated saw-scaled viper).